The primary structure comprises 179 residues: Large ribosomal subunit protein uL5 (179 aa).

This sequence belongs to the universal ribosomal protein uL5 family. In terms of assembly, part of the 50S ribosomal subunit; part of the 5S rRNA/L5/L18/L25 subcomplex. Contacts the 5S rRNA and the P site tRNA. Forms a bridge to the 30S subunit in the 70S ribosome.

Its function is as follows. This is one of the proteins that bind and probably mediate the attachment of the 5S RNA into the large ribosomal subunit, where it forms part of the central protuberance. In the 70S ribosome it contacts protein S13 of the 30S subunit (bridge B1b), connecting the 2 subunits; this bridge is implicated in subunit movement. Contacts the P site tRNA; the 5S rRNA and some of its associated proteins might help stabilize positioning of ribosome-bound tRNAs. In Marinobacter nauticus (strain ATCC 700491 / DSM 11845 / VT8) (Marinobacter aquaeolei), this protein is Large ribosomal subunit protein uL5.